Reading from the N-terminus, the 161-residue chain is Large ribosomal subunit protein uL10 (161 aa).

The protein belongs to the universal ribosomal protein uL10 family. As to quaternary structure, part of the ribosomal stalk of the 50S ribosomal subunit. The N-terminus interacts with L11 and the large rRNA to form the base of the stalk. The C-terminus forms an elongated spine to which L12 dimers bind in a sequential fashion forming a multimeric L10(L12)X complex.

In terms of biological role, forms part of the ribosomal stalk, playing a central role in the interaction of the ribosome with GTP-bound translation factors. This is Large ribosomal subunit protein uL10 from Campylobacter fetus subsp. fetus (strain 82-40).